A 544-amino-acid chain; its full sequence is Chaperonin GroEL (544 aa).

ATP-binding positions include 30–33 (TLGP), K51, 87–91 (DGTTT), G415, 481–483 (DAL), and D497.

Belongs to the chaperonin (HSP60) family. Forms a cylinder of 14 subunits composed of two heptameric rings stacked back-to-back. Interacts with the co-chaperonin GroES.

It localises to the cytoplasm. The catalysed reaction is ATP + H2O + a folded polypeptide = ADP + phosphate + an unfolded polypeptide.. Together with its co-chaperonin GroES, plays an essential role in assisting protein folding. The GroEL-GroES system forms a nano-cage that allows encapsulation of the non-native substrate proteins and provides a physical environment optimized to promote and accelerate protein folding. This Chlamydia muridarum (strain MoPn / Nigg) protein is Chaperonin GroEL.